The primary structure comprises 221 residues: Oxaloacetate tautomerase FAHD1, mitochondrial (221 aa).

Residues Met-1–Tyr-24 constitute a mitochondrion transit peptide. Ser-37 carries the post-translational modification Phosphoserine. 3 residues coordinate Mg(2+): Glu-68, Glu-70, and Asp-99. Lys-110 carries the N6-acetyllysine modification. Lys-112 bears the N6-succinyllysine mark.

It belongs to the FAH family. Homodimer. Mg(2+) serves as cofactor. Requires Mn(2+) as cofactor.

The protein localises to the mitochondrion. It is found in the cytoplasm. The protein resides in the cytosol. The enzyme catalyses oxaloacetate = enol-oxaloacetate. It catalyses the reaction oxaloacetate + H(+) = pyruvate + CO2. The catalysed reaction is a 3-acylpyruvate + H2O = a carboxylate + pyruvate + H(+). It carries out the reaction acetylpyruvate + H2O = acetate + pyruvate + H(+). The enzyme catalyses 3-fumarylpyruvate + H2O = fumarate + pyruvate + H(+). Its activity is regulated as follows. Oxaloacetate decarboxylation is competitively inhibited by oxalate. Its function is as follows. Tautomerase that converts enol-oxaloacetate, a strong inhibitor of succinate dehydrogenase, to the physiological keto form of oxaloacetate. It is thereby required to maximize aerobic respiration efficiency by preventing succinate dehydrogenase inhibition. Also acts as a weak oxaloacetate decarboxylase (ODx), catalyzing the decarboxylation of oxaloacetate (OAA) to pyruvate and CO(2), and as such is likely a regulatory enzyme in the TCA cycle. Also displays acylpyruvase activity, being able to hydrolyze acetylpyruvate and fumarylpyruvate in vitro. This Pongo abelii (Sumatran orangutan) protein is Oxaloacetate tautomerase FAHD1, mitochondrial (FAHD1).